Reading from the N-terminus, the 152-residue chain is UPF0756 membrane protein CA_C0092 (152 aa).

4 consecutive transmembrane segments (helical) span residues 5–25 (IILVVILGISIVGKATSVAIS), 50–70 (MFWGLVLLTAAILIPIAQGNV), 82–102 (FVGITALVLSFLTTYLSGVGL), and 117–137 (LILGSVAAAAFLGGVPVGPLI).

The protein belongs to the UPF0756 family.

It localises to the cell membrane. The chain is UPF0756 membrane protein CA_C0092 from Clostridium acetobutylicum (strain ATCC 824 / DSM 792 / JCM 1419 / IAM 19013 / LMG 5710 / NBRC 13948 / NRRL B-527 / VKM B-1787 / 2291 / W).